We begin with the raw amino-acid sequence, 92 residues long: Integration host factor subunit beta (92 aa).

Belongs to the bacterial histone-like protein family. Heterodimer of an alpha and a beta chain.

In terms of biological role, this protein is one of the two subunits of integration host factor, a specific DNA-binding protein that functions in genetic recombination as well as in transcriptional and translational control. In Vibrio cholerae serotype O1 (strain ATCC 39541 / Classical Ogawa 395 / O395), this protein is Integration host factor subunit beta.